We begin with the raw amino-acid sequence, 75 residues long: Signaling peptide TAXIMIN 1 (75 aa).

An N-terminal signal peptide occupies residues 1–29 (MCDGDCRPLGFLLGLPFAFLSLLLSIIGV).

In terms of tissue distribution, expressed in shoot apical meristems (SAM); mostly specific to the L1 layer in the center of the meristem but also detected in the L2 layer in organ primordia. Also observed in the vasculature of seedling roots.

It is found in the secreted. With respect to regulation, counteracted by the antibiotic cefotaxime during responses to light stress. Functionally, signaling peptide involved in the regulation of lateral organs separation, including fruits and leaves. Involved in the perception of and response to light stress via the control of sinapoyl-malate accumulation, a UV-B protecting compound. This is Signaling peptide TAXIMIN 1 from Arabidopsis thaliana (Mouse-ear cress).